The primary structure comprises 88 residues: Small ribosomal subunit protein uS17 (88 aa).

It belongs to the universal ribosomal protein uS17 family. As to quaternary structure, part of the 30S ribosomal subunit.

Its function is as follows. One of the primary rRNA binding proteins, it binds specifically to the 5'-end of 16S ribosomal RNA. The polypeptide is Small ribosomal subunit protein uS17 (Azotobacter vinelandii (strain DJ / ATCC BAA-1303)).